A 688-amino-acid polypeptide reads, in one-letter code: Elongation factor G (688 aa).

In terms of domain architecture, tr-type G spans 8–282 (ERTRNIGIMA…AVLDYLPAPT (275 aa)). Residues 17–24 (AHIDAGKT), 81–85 (DTPGH), and 135–138 (NKMD) contribute to the GTP site.

Belongs to the TRAFAC class translation factor GTPase superfamily. Classic translation factor GTPase family. EF-G/EF-2 subfamily.

The protein resides in the cytoplasm. In terms of biological role, catalyzes the GTP-dependent ribosomal translocation step during translation elongation. During this step, the ribosome changes from the pre-translocational (PRE) to the post-translocational (POST) state as the newly formed A-site-bound peptidyl-tRNA and P-site-bound deacylated tRNA move to the P and E sites, respectively. Catalyzes the coordinated movement of the two tRNA molecules, the mRNA and conformational changes in the ribosome. The polypeptide is Elongation factor G (Clostridioides difficile (strain 630) (Peptoclostridium difficile)).